The following is a 501-amino-acid chain: Glutamyl-tRNA(Gln) amidotransferase subunit A (501 aa).

Catalysis depends on charge relay system residues Lys-80 and Ser-155. The Acyl-ester intermediate role is filled by Ser-179.

It belongs to the amidase family. GatA subfamily. As to quaternary structure, heterotrimer of A, B and C subunits.

It catalyses the reaction L-glutamyl-tRNA(Gln) + L-glutamine + ATP + H2O = L-glutaminyl-tRNA(Gln) + L-glutamate + ADP + phosphate + H(+). Allows the formation of correctly charged Gln-tRNA(Gln) through the transamidation of misacylated Glu-tRNA(Gln) in organisms which lack glutaminyl-tRNA synthetase. The reaction takes place in the presence of glutamine and ATP through an activated gamma-phospho-Glu-tRNA(Gln). The sequence is that of Glutamyl-tRNA(Gln) amidotransferase subunit A from Cupriavidus taiwanensis (strain DSM 17343 / BCRC 17206 / CCUG 44338 / CIP 107171 / LMG 19424 / R1) (Ralstonia taiwanensis (strain LMG 19424)).